Reading from the N-terminus, the 117-residue chain is Prefoldin subunit beta (117 aa).

This sequence belongs to the prefoldin subunit beta family. Heterohexamer of two alpha and four beta subunits.

It localises to the cytoplasm. In terms of biological role, molecular chaperone capable of stabilizing a range of proteins. Seems to fulfill an ATP-independent, HSP70-like function in archaeal de novo protein folding. This chain is Prefoldin subunit beta (pfdB), found in Pyrococcus horikoshii (strain ATCC 700860 / DSM 12428 / JCM 9974 / NBRC 100139 / OT-3).